A 553-amino-acid polypeptide reads, in one-letter code: Glycerol-3-phosphate dehydrogenase (553 aa).

13-41 serves as a coordination point for FAD; sequence DLIVIGGGINGVGTARDGALRGLKTLLIE.

Belongs to the FAD-dependent glycerol-3-phosphate dehydrogenase family. FAD serves as cofactor.

It localises to the cytoplasm. It carries out the reaction a quinone + sn-glycerol 3-phosphate = dihydroxyacetone phosphate + a quinol. This chain is Glycerol-3-phosphate dehydrogenase (glpD), found in Synechocystis sp. (strain ATCC 27184 / PCC 6803 / Kazusa).